We begin with the raw amino-acid sequence, 201 residues long: Lipoprotein signal peptidase (201 aa).

The next 3 membrane-spanning stretches (helical) occupy residues 33-53, 86-106, and 110-130; these read LLLS…VLAV, GYTW…FWMG, and VSSW…GNLV. Catalysis depends on residues D146 and D160. Residues 158-178 traverse the membrane as a helical segment; that stretch reads VADPSVVVGAILLVVLSIFGF.

This sequence belongs to the peptidase A8 family.

It localises to the cell membrane. It catalyses the reaction Release of signal peptides from bacterial membrane prolipoproteins. Hydrolyzes -Xaa-Yaa-Zaa-|-(S,diacylglyceryl)Cys-, in which Xaa is hydrophobic (preferably Leu), and Yaa (Ala or Ser) and Zaa (Gly or Ala) have small, neutral side chains.. Its pathway is protein modification; lipoprotein biosynthesis (signal peptide cleavage). This protein specifically catalyzes the removal of signal peptides from prolipoproteins. The chain is Lipoprotein signal peptidase from Mycobacterium leprae (strain Br4923).